The chain runs to 419 residues: MYKKIKGTDDIYGEDMKYWYFIENTAREITRLYGYSEIRTPIFEQTELFVRSVGEETDIVQKEMYTFKDKGDRSITLRPEGTAPTIRAFIENSMVATGLPKRLFYIGPMFRYERPQAGRQRQFHQFGIELIGSSSSLADAEAIVVADRFLKSLGLVDYTIKINSIGCEKCRAEYKKKLKEYYSDKLDKVCDDCKRRYNTNILRLLDCKVDVEYVKDAPKITDYLCDNCKKHYEETKNILDKLDINYEEDPLLVRGLDYYNGIVFEIHHGKLGAQSAIGGGGRYDNLIKELGGQQTPSLGFAMGIERLIIAVKKEGIPVEEIKNNEVFVAHLGESARIEAIKISEELRDNGISVVFNTMERGLSAQLKHASRLNCRLCLIVGENELERNVVILRNMKTGEQIEIERDYIVGTTREWIDEQ.

Belongs to the class-II aminoacyl-tRNA synthetase family. As to quaternary structure, homodimer.

It localises to the cytoplasm. The enzyme catalyses tRNA(His) + L-histidine + ATP = L-histidyl-tRNA(His) + AMP + diphosphate + H(+). The protein is Histidine--tRNA ligase of Thermosipho melanesiensis (strain DSM 12029 / CIP 104789 / BI429).